Reading from the N-terminus, the 226-residue chain is Endonuclease V (226 aa).

D42 and D110 together coordinate Mg(2+).

Belongs to the endonuclease V family. Mg(2+) serves as cofactor.

The protein localises to the cytoplasm. It carries out the reaction Endonucleolytic cleavage at apurinic or apyrimidinic sites to products with a 5'-phosphate.. DNA repair enzyme involved in the repair of deaminated bases. Selectively cleaves double-stranded DNA at the second phosphodiester bond 3' to a deoxyinosine leaving behind the intact lesion on the nicked DNA. The polypeptide is Endonuclease V (Thermus thermophilus (strain ATCC BAA-163 / DSM 7039 / HB27)).